The primary structure comprises 564 residues: Hsp70-Hsp90 organising protein (564 aa).

TPR repeat units lie at residues A7–D40, V42–W74, and K76–N108. Positions E197–E239 form a coiled coil. Residues N199–K247 form a disordered region. Over residues A201 to K233 the composition is skewed to basic and acidic residues. TPR repeat units lie at residues G243–D276, M278–F310, A318–R351, A378–D411, K413–F445, and V446–N479. Positions D513–L552 constitute an STI1 domain.

Monomer. Homodimer. Forms a complex composed of HOP and chaperones HSP70 and HSP90; the interaction is stronger in the absence of ATP. Interacts (via TPR 1, 2, 3, 7, 8 and 9 repeats) with HSP70 (via C-terminus); the interaction is direct and is stronger in the absence of ATP. Interacts (via TPR 4, 5 and 6 repeats) with HSP90 (via C-terminus); the interaction is direct.

The protein localises to the cytoplasm. Its function is as follows. Acts as a co-chaperone and mediates the association of the chaperones HSP70 and HSP90 probably facilitating substrate transfer from HSP70 to HSP90. Stimulates HSP70 ATPase activity and, in contrast, inhibits HSP90 ATPase activity. The polypeptide is Hsp70-Hsp90 organising protein (Plasmodium falciparum (isolate 3D7)).